We begin with the raw amino-acid sequence, 457 residues long: MARRRRRACIALFLVLLFAFGTLMGLRTLKAPDGLPALGPGLELAPFERRPEGAPAPAARAPAAPAAPPPPPPPPRTADPGGSPGPAPAEAEPAPVQSLRVYSDLHAFYYSWYGSPRREGHYIHWDHVMVPHWDPKISASYPRGRHSPPDDLGSSFYPELGPYSSRDPEVLREHMTQLKEAAIGVLVLSWYPPGMADDNGEPSDDLVPAILDTAHQYSIQVAFHIQPYKGRDDITVHDNIKYIIDTYGSHGAFYRYKNSMGKSLPLFYIYDSYLTSPEAWAHLLTPNGPHSIRNTPYDGVFIALLVEEGHTHDILAAGFDGMYTYFASNGFSFGSSHQNWKAVKNFCDANNLMFIPSVGPGYIDTSIRPWNNHNTRNRVNGKYYETALQAALTVRPEIVSITSFNEWHEGTQIEKAIPKKTPTRLYLDYLPHQPSLYLELTRRWAEHFIKEKEQWLM.

Residues 1–8 (MARRRRRA) lie on the Cytoplasmic side of the membrane. The chain crosses the membrane as a helical; Signal-anchor for type II membrane protein span at residues 9–29 (CIALFLVLLFAFGTLMGLRTL). The Lumenal segment spans residues 30–457 (KAPDGLPALG…FIKEKEQWLM (428 aa)). The tract at residues 46-93 (PFERRPEGAPAPAARAPAAPAAPPPPPPPPRTADPGGSPGPAPAEAEP) is disordered. Residues 53 to 64 (GAPAPAARAPAA) show a composition bias toward low complexity. The segment covering 65-87 (PAAPPPPPPPPRTADPGGSPGPA) has biased composition (pro residues).

The protein belongs to the glycosyl hydrolase 99 family.

It is found in the golgi apparatus membrane. The chain is Glycoprotein endo-alpha-1,2-mannosidase-like protein (MANEAL) from Homo sapiens (Human).